A 316-amino-acid polypeptide reads, in one-letter code: Protein C4 (316 aa).

This sequence belongs to the poxviridae OPG031 protein family.

The protein localises to the host cytoplasm. Its subcellular location is the host nucleus. Its function is as follows. Plays a role in the inhibition of host NF-kappa-B activation. Mechanistically, blocks the subunit p65/RELA translocation into the host nucleus. This Vaccinia virus (strain Western Reserve) (VACV) protein is Protein C4 (OPG031).